We begin with the raw amino-acid sequence, 62 residues long: Large ribosomal subunit protein bL32 (62 aa).

The span at 1–16 shows a compositional bias: basic residues; sequence MAVQKNRKTRSKRGMR. Positions 1–62 are disordered; it reads MAVQKNRKTR…VISQGDSDDE (62 aa). Over residues 53–62 the composition is skewed to polar residues; sequence VISQGDSDDE.

The protein belongs to the bacterial ribosomal protein bL32 family.

The protein is Large ribosomal subunit protein bL32 of Alcanivorax borkumensis (strain ATCC 700651 / DSM 11573 / NCIMB 13689 / SK2).